The primary structure comprises 1230 residues: Myosin-1 (1230 aa).

The tract at residues Met1–Asp32 is disordered. Positions Val39–Asp713 constitute a Myosin motor domain. Gly132–Thr139 is an ATP binding site. The interval Ser403 to Ala485 is actin-binding. 2 IQ domains span residues His717 to Ala737 and Ala738 to Gln763. Residues Arg771–Pro961 form the TH1 domain. Disordered regions lie at residues Gln945 to Pro1018, Thr1033 to Lys1065, and Ala1116 to Trp1230. Over residues Thr1033 to Arg1045 the composition is skewed to polar residues. 2 stretches are compositionally biased toward pro residues: residues Val1047 to Pro1062 and Thr1122 to Pro1142. One can recognise an SH3 domain in the interval Ser1064–Pro1123. Residues Arg1179 to Arg1214 are compositionally biased toward low complexity.

Belongs to the TRAFAC class myosin-kinesin ATPase superfamily. Myosin family.

Its subcellular location is the cytoplasm. The protein resides in the cytoskeleton. The protein localises to the actin patch. In terms of biological role, type-I myosin implicated in the organization of the actin cytoskeleton. Required for proper actin cytoskeleton polarization. At the cell cortex, assembles in patch-like structures together with proteins from the actin-polymerizing machinery and promotes actin assembly. Functions as actin nucleation-promoting factor (NPF) for the Arp2/3 complex. This is Myosin-1 (myoA) from Sclerotinia sclerotiorum (strain ATCC 18683 / 1980 / Ss-1) (White mold).